The chain runs to 704 residues: Plasma membrane ATPase 2 (704 aa).

Residues 1 to 16 form a helical membrane-spanning segment; that stretch reads CSIAVGMIIEIIVMYP. At 17–26 the chain is on the extracellular side; that stretch reads IQHRKYRPGI. A helical membrane pass occupies residues 27–48; that stretch reads DNLLVLLIGGIPIAMPTVLSVT. Residues 49-395 are Cytoplasmic-facing; sequence MAIGSHRLAQ…TSRAIFQRMK (347 aa). The active-site 4-aspartylphosphate intermediate is aspartate 81. Positions 340 and 344 each coordinate Mg(2+). Residues 396–417 traverse the membrane as a helical segment; that stretch reads NYTIYAVSITIRIVLGFMLLAL. The Extracellular segment spans residues 418–422; that stretch reads IWKFD. Residues 423–445 traverse the membrane as a helical segment; sequence FPPFMVLIIAILNDGTIMTISKD. Topologically, residues 446 to 461 are cytoplasmic; that stretch reads RVKPSPLPDSWKLAEI. The chain crosses the membrane as a helical span at residues 462–482; that stretch reads FTTGVVLGGYLAMMTVIFFWA. Topologically, residues 483-507 are extracellular; sequence AYETQFFPRVFGVSTLQRTATDDFR. Residues 508–528 form a helical membrane-spanning segment; it reads KLASAIYLQVSTISQALIFVT. The Cytoplasmic segment spans residues 529 to 540; the sequence is RSRSWSFVERPG. The helical transmembrane segment at 541–561 threads the bilayer; it reads LLLVVALIVAQLVATLIAVYA. Residues 562 to 570 lie on the Extracellular side of the membrane; that stretch reads SWSFAAIEG. Residues 571–591 traverse the membrane as a helical segment; that stretch reads IGWGWAGVIWLYNLVFYFPLD. Residues 592 to 704 are Cytoplasmic-facing; it reads IIKFLIRYAL…IETIQQSYTV (113 aa).

This sequence belongs to the cation transport ATPase (P-type) (TC 3.A.3) family. Type IIIA subfamily. As to quaternary structure, possibly exists as a homodimer or a homotrimer.

It localises to the cell membrane. It catalyses the reaction ATP + H2O + H(+)(in) = ADP + phosphate + 2 H(+)(out). The plasma membrane ATPase of plants and fungi is a hydrogen ion pump. The proton gradient it generates drives the active transport of nutrients by H(+)-symport. The resulting external acidification and/or internal alkinization may mediate growth responses. This is Plasma membrane ATPase 2 (LHA2) from Solanum lycopersicum (Tomato).